Consider the following 718-residue polypeptide: Heat shock 70 kDa protein 7, chloroplastic (718 aa).

The transit peptide at 1-92 directs the protein to the chloroplast; the sequence is MASSAAQIHI…IDLGTTNSAV (92 aa). Polar residues predominate over residues 668–678; the sequence is QIGQSLYNQPQ. Residues 668-718 form a disordered region; the sequence is QIGQSLYNQPQPGGADSPPGGEASSSSDTSSSAKGGDNGGDVIDADFTDSN.

This sequence belongs to the heat shock protein 70 (TC 1.A.33) family. DnaK subfamily.

It localises to the plastid. The protein localises to the chloroplast stroma. Functionally, acts redundantly with HSP70-6 in the thermotolerance of germinating seeds. Plays an important role in the protein precursor import into chloroplasts. Its function is as follows. In cooperation with other chaperones, Hsp70s are key components that facilitate folding of de novo synthesized proteins, assist translocation of precursor proteins into organelles, and are responsible for degradation of damaged protein under stress conditions. In Arabidopsis thaliana (Mouse-ear cress), this protein is Heat shock 70 kDa protein 7, chloroplastic (HSP70-7).